Reading from the N-terminus, the 395-residue chain is Succinyl-diaminopimelate desuccinylase 2 (395 aa).

Histidine 79 is a binding site for Zn(2+). Residue aspartate 81 is part of the active site. Aspartate 112 provides a ligand contact to Zn(2+). Glutamate 145 (proton acceptor) is an active-site residue. Zn(2+)-binding residues include glutamate 146, glutamate 174, and histidine 363.

This sequence belongs to the peptidase M20A family. DapE subfamily. Homodimer. Requires Zn(2+) as cofactor. The cofactor is Co(2+).

The enzyme catalyses N-succinyl-(2S,6S)-2,6-diaminopimelate + H2O = (2S,6S)-2,6-diaminopimelate + succinate. The protein operates within amino-acid biosynthesis; L-lysine biosynthesis via DAP pathway; LL-2,6-diaminopimelate from (S)-tetrahydrodipicolinate (succinylase route): step 3/3. Catalyzes the hydrolysis of N-succinyl-L,L-diaminopimelic acid (SDAP), forming succinate and LL-2,6-diaminopimelate (DAP), an intermediate involved in the bacterial biosynthesis of lysine and meso-diaminopimelic acid, an essential component of bacterial cell walls. The chain is Succinyl-diaminopimelate desuccinylase 2 from Ruegeria sp. (strain TM1040) (Silicibacter sp.).